The primary structure comprises 518 residues: Endoglucanase 18 (518 aa).

Topologically, residues 1 to 35 are cytoplasmic; sequence MANCVRCCCWLLVLMLMALAITAAVVFVRYKNGEG. The helical transmembrane segment at 36–56 threads the bilayer; the sequence is VFPFPGVPGAVDHKYADALAV. Residues 57–518 are Extracellular-facing; that stretch reads ALQFFQVQKS…STSSLARSLS (462 aa). N71 carries N-linked (GlcNAc...) asparagine glycosylation. Catalysis depends on D101, which acts as the Nucleophile. N214, N251, and N272 each carry an N-linked (GlcNAc...) asparagine glycan. H436 is an active-site residue. N477 carries N-linked (GlcNAc...) asparagine glycosylation. Residues D482 and E491 contribute to the active site.

This sequence belongs to the glycosyl hydrolase 9 (cellulase E) family.

The protein localises to the membrane. The catalysed reaction is Endohydrolysis of (1-&gt;4)-beta-D-glucosidic linkages in cellulose, lichenin and cereal beta-D-glucans.. The sequence is that of Endoglucanase 18 from Oryza sativa subsp. japonica (Rice).